The chain runs to 197 residues: CRISPR system CMR subunit Cmr7 1 (197 aa).

The protein belongs to the CRISPR system Cmr7 family. As to quaternary structure, possible homodimer. Part of the CMR ribonucleoprotein complex, consisting of crRNA plus Cmr1/Cmr2/Cmr3/Cmr4/Cmr5/Cmr6 at 1:1 and possibly 3 Cmr7 dimers. A Cmr2/Cmr3/Cmr7 subcomplex without crRNA can also be isolated. It does not cleave target RNA.

The protein localises to the cytoplasm. Functionally, CRISPR (clustered regularly interspaced short palindromic repeat) is an adaptive immune system that provides protection against mobile genetic elements (viruses, transposable elements and conjugative plasmids). CRISPR clusters contain spacers, sequences complementary to antecedent mobile elements, and target invading nucleic acids. CRISPR clusters are transcribed and processed into CRISPR RNA (crRNA). The CMR complex degrades RNA complementary to the crRNA (target RNA) within UA dinucleotides, generating 3'-OH and 5'-phosphate ends. Activity is dependent on the 8 nt long 5' tag in the crRNA, an unpaired 3' flag on the target RNA, and is stimulated by ATP. Some cleavage of the guide crRNA can also be observed. This chain is CRISPR system CMR subunit Cmr7 1 (cmr7A), found in Saccharolobus solfataricus (strain ATCC 35092 / DSM 1617 / JCM 11322 / P2) (Sulfolobus solfataricus).